The sequence spans 278 residues: Protein FixR (278 aa).

40 to 64 (LLTGASRGIGHATAKLFSEAGWRII) contacts NAD(+). Ser-175 is a substrate binding site. The active-site Proton acceptor is Tyr-189.

This sequence belongs to the short-chain dehydrogenases/reductases (SDR) family.

The sequence is that of Protein FixR (fixR) from Bradyrhizobium diazoefficiens (strain JCM 10833 / BCRC 13528 / IAM 13628 / NBRC 14792 / USDA 110).